We begin with the raw amino-acid sequence, 82 residues long: MSERGHRRTQNGVVVSDKMDKTVVVKVDRLIKHPVYNKYIKRSAKYKVHDENNVCKIGDRVQIIECRPLSKDKRWNLKQISN.

Belongs to the universal ribosomal protein uS17 family. Part of the 30S ribosomal subunit.

Functionally, one of the primary rRNA binding proteins, it binds specifically to the 5'-end of 16S ribosomal RNA. This chain is Small ribosomal subunit protein uS17, found in Pelobacter propionicus (strain DSM 2379 / NBRC 103807 / OttBd1).